We begin with the raw amino-acid sequence, 492 residues long: Glutamyl-tRNA(Gln) amidotransferase subunit A (492 aa).

Residues Lys-79 and Ser-154 each act as charge relay system in the active site. The active-site Acyl-ester intermediate is the Ser-178.

The protein belongs to the amidase family. GatA subfamily. Heterotrimer of A, B and C subunits.

It catalyses the reaction L-glutamyl-tRNA(Gln) + L-glutamine + ATP + H2O = L-glutaminyl-tRNA(Gln) + L-glutamate + ADP + phosphate + H(+). In terms of biological role, allows the formation of correctly charged Gln-tRNA(Gln) through the transamidation of misacylated Glu-tRNA(Gln) in organisms which lack glutaminyl-tRNA synthetase. The reaction takes place in the presence of glutamine and ATP through an activated gamma-phospho-Glu-tRNA(Gln). The chain is Glutamyl-tRNA(Gln) amidotransferase subunit A from Acinetobacter baumannii (strain ACICU).